The chain runs to 455 residues: Alcohol acyl transferase 1 allele RGb (455 aa).

Catalysis depends on proton acceptor residues H164 and N385.

It belongs to the plant acyltransferase family.

In terms of biological role, involved in the biosynthesis of volatile esters which confer ripe apple fruit flavor. Alcohol acyl transferase that can use a wide range of alcohols as substrate to produce esters. This chain is Alcohol acyl transferase 1 allele RGb, found in Malus domestica (Apple).